The chain runs to 268 residues: 4-hydroxy-tetrahydrodipicolinate reductase (268 aa).

8 to 13 (GAAGRM) contributes to the NAD(+) binding site. Arginine 36 is an NADP(+) binding site. NAD(+)-binding positions include 99–101 (GTT) and 123–126 (AANF). Histidine 156 (proton donor/acceptor) is an active-site residue. Histidine 157 provides a ligand contact to (S)-2,3,4,5-tetrahydrodipicolinate. Catalysis depends on lysine 160, which acts as the Proton donor. 166-167 (GT) serves as a coordination point for (S)-2,3,4,5-tetrahydrodipicolinate.

Belongs to the DapB family.

It is found in the cytoplasm. The enzyme catalyses (S)-2,3,4,5-tetrahydrodipicolinate + NAD(+) + H2O = (2S,4S)-4-hydroxy-2,3,4,5-tetrahydrodipicolinate + NADH + H(+). It catalyses the reaction (S)-2,3,4,5-tetrahydrodipicolinate + NADP(+) + H2O = (2S,4S)-4-hydroxy-2,3,4,5-tetrahydrodipicolinate + NADPH + H(+). It participates in amino-acid biosynthesis; L-lysine biosynthesis via DAP pathway; (S)-tetrahydrodipicolinate from L-aspartate: step 4/4. Functionally, catalyzes the conversion of 4-hydroxy-tetrahydrodipicolinate (HTPA) to tetrahydrodipicolinate. The polypeptide is 4-hydroxy-tetrahydrodipicolinate reductase (Pseudomonas fluorescens (strain Pf0-1)).